Reading from the N-terminus, the 358-residue chain is UDP-N-acetylglucosamine--N-acetylmuramyl-(pentapeptide) pyrophosphoryl-undecaprenol N-acetylglucosamine transferase (358 aa).

Residues 10-12 (TGG), Asn-124, Arg-165, Ser-187, Ile-243, and Gln-288 each bind UDP-N-acetyl-alpha-D-glucosamine.

Belongs to the glycosyltransferase 28 family. MurG subfamily.

The protein localises to the cell inner membrane. It catalyses the reaction di-trans,octa-cis-undecaprenyl diphospho-N-acetyl-alpha-D-muramoyl-L-alanyl-D-glutamyl-meso-2,6-diaminopimeloyl-D-alanyl-D-alanine + UDP-N-acetyl-alpha-D-glucosamine = di-trans,octa-cis-undecaprenyl diphospho-[N-acetyl-alpha-D-glucosaminyl-(1-&gt;4)]-N-acetyl-alpha-D-muramoyl-L-alanyl-D-glutamyl-meso-2,6-diaminopimeloyl-D-alanyl-D-alanine + UDP + H(+). It participates in cell wall biogenesis; peptidoglycan biosynthesis. In terms of biological role, cell wall formation. Catalyzes the transfer of a GlcNAc subunit on undecaprenyl-pyrophosphoryl-MurNAc-pentapeptide (lipid intermediate I) to form undecaprenyl-pyrophosphoryl-MurNAc-(pentapeptide)GlcNAc (lipid intermediate II). This chain is UDP-N-acetylglucosamine--N-acetylmuramyl-(pentapeptide) pyrophosphoryl-undecaprenol N-acetylglucosamine transferase, found in Syntrophotalea carbinolica (strain DSM 2380 / NBRC 103641 / GraBd1) (Pelobacter carbinolicus).